We begin with the raw amino-acid sequence, 259 residues long: Small ribosomal subunit protein uS2 (259 aa).

The protein belongs to the universal ribosomal protein uS2 family.

This is Small ribosomal subunit protein uS2 from Streptococcus pneumoniae serotype 4 (strain ATCC BAA-334 / TIGR4).